The following is a 100-amino-acid chain: NADH-quinone oxidoreductase subunit K (100 aa).

The next 3 membrane-spanning stretches (helical) occupy residues 4–24 (MQHGLILAAILFTLGLTGLLI), 28–48 (LIFMLISLEVMINSAALAWVV), and 60–80 (IFYLLAITLAAAEASIGLALL).

This sequence belongs to the complex I subunit 4L family. NDH-1 is composed of 13 different subunits. Subunits NuoA, H, J, K, L, M, N constitute the membrane sector of the complex.

The protein resides in the cell membrane. The enzyme catalyses a quinone + NADH + 5 H(+)(in) = a quinol + NAD(+) + 4 H(+)(out). NDH-1 shuttles electrons from NADH, via FMN and iron-sulfur (Fe-S) centers, to quinones in the respiratory chain. The immediate electron acceptor for the enzyme in this species is believed to be ubiquinone. Couples the redox reaction to proton translocation (for every two electrons transferred, four hydrogen ions are translocated across the cytoplasmic membrane), and thus conserves the redox energy in a proton gradient. This is NADH-quinone oxidoreductase subunit K from Hamiltonella defensa subsp. Acyrthosiphon pisum (strain 5AT).